The chain runs to 82 residues: RNA-binding protein Hfq (82 aa).

Residues 10–70 enclose the Sm domain; it reads DLFLNTVRKS…ISTIMPSQPV (61 aa).

The protein belongs to the Hfq family. Homohexamer.

Functionally, RNA chaperone that binds small regulatory RNA (sRNAs) and mRNAs to facilitate mRNA translational regulation in response to envelope stress, environmental stress and changes in metabolite concentrations. Also binds with high specificity to tRNAs. The protein is RNA-binding protein Hfq of Chelativorans sp. (strain BNC1).